A 376-amino-acid chain; its full sequence is Probable transcription factor At1g61730 (376 aa).

A disordered region spans residues 1–150 (MTKKLNPLED…RVKKDEESVK (150 aa)). Positions 17-40 (SDEDDVETSEAGEASDDSSSSEED) are enriched in acidic residues. Residue S49 is modified to Phosphoserine. Low complexity predominate over residues 49-72 (SPSATTAAAPPAKSTAVSTAADSD). A compositionally biased stretch (acidic residues) spans 73–83 (SGSETETDSDS). The segment covering 87–103 (NPPNSGSGKTIALNTVN) has biased composition (polar residues).

The protein belongs to the GeBP family. Interacts with DEK3.

This Arabidopsis thaliana (Mouse-ear cress) protein is Probable transcription factor At1g61730.